The following is a 122-amino-acid chain: Large ribosomal subunit protein uL14 (122 aa).

This sequence belongs to the universal ribosomal protein uL14 family. As to quaternary structure, part of the 50S ribosomal subunit. Forms a cluster with proteins L3 and L19. In the 70S ribosome, L14 and L19 interact and together make contacts with the 16S rRNA in bridges B5 and B8.

Functionally, binds to 23S rRNA. Forms part of two intersubunit bridges in the 70S ribosome. In Petrotoga mobilis (strain DSM 10674 / SJ95), this protein is Large ribosomal subunit protein uL14.